We begin with the raw amino-acid sequence, 251 residues long: Elongator complex protein 6 (251 aa).

Belongs to the ELP6 family. In terms of assembly, component of the elongator complex composed of Elp1, Elp2, Elp3, Elp4, Elp5 and Elp6. The elongator complex associates with and stabilizes microtubules; efficient interaction requires the full complex. Interacts with InR/Insulin-like receptor; the interaction may stabilize Elp6.

The protein localises to the cytoplasm. It localises to the nucleus. Its subcellular location is the cytoskeleton. The protein resides in the spindle. It participates in tRNA modification; 5-methoxycarbonylmethyl-2-thiouridine-tRNA biosynthesis. Component of the elongator complex, which is required for multiple tRNA modifications, including mcm5U (5-methoxycarbonylmethyl uridine), mcm5s2U (5-methoxycarbonylmethyl-2-thiouridine), and ncm5U (5-carbamoylmethyl uridine). The elongator complex catalyzes formation of carboxymethyluridine in the wobble base at position 34 in tRNAs. Binding by the elongator complex stabilizes microtubules and promotes their growth. This induces central spindle asymmetry, promoting polarized signaling endosome trafficking during asymmetric cell division and cell fate assignation of sensory organ precursor cells. Required in germ line cells for microtubule organization involved in oocyte polarization and chromosome organization. Involved in InR-TOR (insulin-like receptor-target of rapamycin) signaling regulation of cellular metabolism, autophagy and apoptosis. The protein is Elongator complex protein 6 of Drosophila melanogaster (Fruit fly).